We begin with the raw amino-acid sequence, 204 residues long: Small ribosomal subunit protein eS8 (204 aa).

This sequence belongs to the eukaryotic ribosomal protein eS8 family.

This is Small ribosomal subunit protein eS8 (RPS8) from Griffithsia japonica (Red alga).